A 168-amino-acid polypeptide reads, in one-letter code: Photosystem I assembly protein Ycf3 (168 aa).

3 TPR repeats span residues 35 to 68, 72 to 105, and 120 to 153; these read AFTY…EIDP, SYIL…NPFL, and GEQA…TPGN.

This sequence belongs to the Ycf3 family.

It is found in the plastid. The protein resides in the chloroplast thylakoid membrane. Functionally, essential for the assembly of the photosystem I (PSI) complex. May act as a chaperone-like factor to guide the assembly of the PSI subunits. The polypeptide is Photosystem I assembly protein Ycf3 (Lactuca sativa (Garden lettuce)).